Consider the following 374-residue polypeptide: Ribosomal RNA large subunit methyltransferase G (374 aa).

The protein belongs to the methyltransferase superfamily. RlmG family.

It is found in the cytoplasm. The catalysed reaction is guanosine(1835) in 23S rRNA + S-adenosyl-L-methionine = N(2)-methylguanosine(1835) in 23S rRNA + S-adenosyl-L-homocysteine + H(+). Specifically methylates the guanine in position 1835 (m2G1835) of 23S rRNA. The chain is Ribosomal RNA large subunit methyltransferase G from Pseudomonas savastanoi pv. phaseolicola (strain 1448A / Race 6) (Pseudomonas syringae pv. phaseolicola (strain 1448A / Race 6)).